The chain runs to 586 residues: Arginine--tRNA ligase (586 aa).

The short motif at 133–143 is the 'HIGH' region element; it reads ANPTGPLNIVS.

Belongs to the class-I aminoacyl-tRNA synthetase family. As to quaternary structure, monomer.

The protein resides in the cytoplasm. It carries out the reaction tRNA(Arg) + L-arginine + ATP = L-arginyl-tRNA(Arg) + AMP + diphosphate. This Leptospira borgpetersenii serovar Hardjo-bovis (strain JB197) protein is Arginine--tRNA ligase.